The sequence spans 424 residues: Histidine--tRNA ligase (424 aa).

It belongs to the class-II aminoacyl-tRNA synthetase family. Homodimer.

The protein localises to the cytoplasm. It carries out the reaction tRNA(His) + L-histidine + ATP = L-histidyl-tRNA(His) + AMP + diphosphate + H(+). The protein is Histidine--tRNA ligase of Shewanella pealeana (strain ATCC 700345 / ANG-SQ1).